The chain runs to 144 residues: Methylglyoxal synthase (144 aa).

The region spanning 1 to 144 is the MGS-like domain; that stretch reads MNIALIAHDE…EEEQRKFLTD (144 aa). Residues histidine 8, lysine 12, 34–37, and 54–55 each bind substrate; these read TGTT and SG. Catalysis depends on aspartate 60, which acts as the Proton donor/acceptor. Histidine 87 contributes to the substrate binding site.

Belongs to the methylglyoxal synthase family.

The catalysed reaction is dihydroxyacetone phosphate = methylglyoxal + phosphate. Catalyzes the formation of methylglyoxal from dihydroxyacetone phosphate. This is Methylglyoxal synthase from Exiguobacterium sibiricum (strain DSM 17290 / CCUG 55495 / CIP 109462 / JCM 13490 / 255-15).